The primary structure comprises 177 residues: Large ribosomal subunit protein uL6 (177 aa).

This sequence belongs to the universal ribosomal protein uL6 family. Part of the 50S ribosomal subunit.

This protein binds to the 23S rRNA, and is important in its secondary structure. It is located near the subunit interface in the base of the L7/L12 stalk, and near the tRNA binding site of the peptidyltransferase center. The polypeptide is Large ribosomal subunit protein uL6 (Pseudomonas putida (strain W619)).